A 132-amino-acid polypeptide reads, in one-letter code: Large ribosomal subunit protein uL14 (132 aa).

The protein belongs to the universal ribosomal protein uL14 family. Part of the 50S ribosomal subunit. Forms a cluster with proteins L3 and L24e, part of which may contact the 16S rRNA in 2 intersubunit bridges.

Functionally, binds to 23S rRNA. Forms part of two intersubunit bridges in the 70S ribosome. The protein is Large ribosomal subunit protein uL14 of Methanothrix thermoacetophila (strain DSM 6194 / JCM 14653 / NBRC 101360 / PT) (Methanosaeta thermophila).